A 416-amino-acid chain; its full sequence is tRNA(Met) cytidine acetate ligase (416 aa).

Residues 7 to 20 (VVEY…HLYH), Gly101, Asn163, and Arg188 each bind ATP.

Belongs to the TmcAL family.

It localises to the cytoplasm. It catalyses the reaction cytidine(34) in elongator tRNA(Met) + acetate + ATP = N(4)-acetylcytidine(34) in elongator tRNA(Met) + AMP + diphosphate. In terms of biological role, catalyzes the formation of N(4)-acetylcytidine (ac(4)C) at the wobble position of elongator tRNA(Met), using acetate and ATP as substrates. First activates an acetate ion to form acetyladenylate (Ac-AMP) and then transfers the acetyl group to tRNA to form ac(4)C34. This chain is tRNA(Met) cytidine acetate ligase, found in Bacillus licheniformis (strain ATCC 14580 / DSM 13 / JCM 2505 / CCUG 7422 / NBRC 12200 / NCIMB 9375 / NCTC 10341 / NRRL NRS-1264 / Gibson 46).